A 347-amino-acid chain; its full sequence is Major capsid protein (347 aa).

Belongs to the baculoviridae major capsid protein family.

The protein resides in the virion. Most abundant structural protein of the nucleocapsid produced during the infection cycle. The monomers are arranged in stacked rings around the nucleoprotein core. The polypeptide is Major capsid protein (P39) (Autographa californica nuclear polyhedrosis virus (AcMNPV)).